The chain runs to 76 residues: Spore germination protein-like protein YdzR (76 aa).

The protein belongs to the GerPA/GerPF family.

This Bacillus subtilis (strain 168) protein is Spore germination protein-like protein YdzR (ydzR).